Consider the following 269-residue polypeptide: Formamidopyrimidine-DNA glycosylase (269 aa).

The Schiff-base intermediate with DNA role is filled by P2. E3 serves as the catalytic Proton donor. K57 functions as the Proton donor; for beta-elimination activity in the catalytic mechanism. DNA is bound by residues H90, R109, and K150. An FPG-type zinc finger spans residues 235 to 269 (QVYGRKGEPCRVCGTPIVATKHAQRATFYCRQCQK). Catalysis depends on R259, which acts as the Proton donor; for delta-elimination activity.

Belongs to the FPG family. In terms of assembly, monomer. It depends on Zn(2+) as a cofactor.

The catalysed reaction is Hydrolysis of DNA containing ring-opened 7-methylguanine residues, releasing 2,6-diamino-4-hydroxy-5-(N-methyl)formamidopyrimidine.. It catalyses the reaction 2'-deoxyribonucleotide-(2'-deoxyribose 5'-phosphate)-2'-deoxyribonucleotide-DNA = a 3'-end 2'-deoxyribonucleotide-(2,3-dehydro-2,3-deoxyribose 5'-phosphate)-DNA + a 5'-end 5'-phospho-2'-deoxyribonucleoside-DNA + H(+). In terms of biological role, involved in base excision repair of DNA damaged by oxidation or by mutagenic agents. Acts as a DNA glycosylase that recognizes and removes damaged bases. Has a preference for oxidized purines, such as 7,8-dihydro-8-oxoguanine (8-oxoG). Has AP (apurinic/apyrimidinic) lyase activity and introduces nicks in the DNA strand. Cleaves the DNA backbone by beta-delta elimination to generate a single-strand break at the site of the removed base with both 3'- and 5'-phosphates. This chain is Formamidopyrimidine-DNA glycosylase, found in Escherichia coli O6:K15:H31 (strain 536 / UPEC).